A 162-amino-acid polypeptide reads, in one-letter code: NADH-quinone oxidoreductase subunit I (162 aa).

4Fe-4S ferredoxin-type domains follow at residues 53–83 (LRRYPNGEERCIACKLCEAVCPAMAITIESE) and 93–122 (TRYDIDMIKCIFCGFCEEACPVDAIVETRV). Positions 63, 66, 69, 73, 102, 105, 108, and 112 each coordinate [4Fe-4S] cluster.

The protein belongs to the complex I 23 kDa subunit family. As to quaternary structure, NDH-1 is composed of 14 different subunits. Subunits NuoA, H, J, K, L, M, N constitute the membrane sector of the complex. Requires [4Fe-4S] cluster as cofactor.

The protein resides in the cell inner membrane. It catalyses the reaction a quinone + NADH + 5 H(+)(in) = a quinol + NAD(+) + 4 H(+)(out). In terms of biological role, NDH-1 shuttles electrons from NADH, via FMN and iron-sulfur (Fe-S) centers, to quinones in the respiratory chain. The immediate electron acceptor for the enzyme in this species is believed to be ubiquinone. Couples the redox reaction to proton translocation (for every two electrons transferred, four hydrogen ions are translocated across the cytoplasmic membrane), and thus conserves the redox energy in a proton gradient. This is NADH-quinone oxidoreductase subunit I from Nitrosomonas europaea (strain ATCC 19718 / CIP 103999 / KCTC 2705 / NBRC 14298).